A 113-amino-acid chain; its full sequence is Cell cycle control protein 50C (113 aa).

Over 1 to 34 (MEERAQHCLSRLLDNSALKQQELPIHRLYFTARR) the chain is Cytoplasmic. Residues 35–55 (VLFVFFATGIFCLCMGIILIL) traverse the membrane as a helical segment. Over 56–113 (SARSTQEIEINYTRICANCAKLRENASNFDKECTCSIPFYLSGKMMVGEIQETRLTLH) the chain is Extracellular. N-linked (GlcNAc...) asparagine glycosylation is present at Asn-66.

It belongs to the CDC50/LEM3 family. In terms of tissue distribution, specifically expressed in testis.

It is found in the membrane. This chain is Cell cycle control protein 50C, found in Homo sapiens (Human).